The chain runs to 247 residues: DNA polymerase sliding clamp 1 (247 aa).

Belongs to the PCNA family. In terms of assembly, homotrimer. The subunits circularize to form a toroid; DNA passes through its center. Replication factor C (RFC) is required to load the toroid on the DNA.

Sliding clamp subunit that acts as a moving platform for DNA processing. Responsible for tethering the catalytic subunit of DNA polymerase and other proteins to DNA during high-speed replication. The sequence is that of DNA polymerase sliding clamp 1 from Sulfolobus acidocaldarius (strain ATCC 33909 / DSM 639 / JCM 8929 / NBRC 15157 / NCIMB 11770).